The sequence spans 439 residues: Phosphoribosylamine--glycine ligase (439 aa).

The ATP-grasp domain maps to 109 to 317 (REFMERNKIP…LVEISERIID (209 aa)). 136–195 (IDEFGKPVVVKPLGLTGGKGVKVVGYQLKDNEEAKEYAEYLIRKDGKVLIEERTDGVEFT) lines the ATP pocket. 3 residues coordinate Mg(2+): Gln275, Glu287, and Asn289. Residues Gln275, Glu287, and Asn289 each coordinate Mn(2+).

The protein belongs to the GARS family. Mg(2+) is required as a cofactor. The cofactor is Mn(2+).

It carries out the reaction 5-phospho-beta-D-ribosylamine + glycine + ATP = N(1)-(5-phospho-beta-D-ribosyl)glycinamide + ADP + phosphate + H(+). It participates in purine metabolism; IMP biosynthesis via de novo pathway; N(1)-(5-phospho-D-ribosyl)glycinamide from 5-phospho-alpha-D-ribose 1-diphosphate: step 2/2. In Pyrococcus furiosus (strain ATCC 43587 / DSM 3638 / JCM 8422 / Vc1), this protein is Phosphoribosylamine--glycine ligase.